Reading from the N-terminus, the 415-residue chain is Histidine--tRNA ligase (415 aa).

It belongs to the class-II aminoacyl-tRNA synthetase family. Homodimer.

The protein localises to the cytoplasm. It catalyses the reaction tRNA(His) + L-histidine + ATP = L-histidyl-tRNA(His) + AMP + diphosphate + H(+). The chain is Histidine--tRNA ligase from Clostridium botulinum (strain Langeland / NCTC 10281 / Type F).